A 394-amino-acid polypeptide reads, in one-letter code: Elongation factor Tu (394 aa).

In terms of domain architecture, tr-type G spans 10-204; that stretch reads KPHVNVGTIG…HLDTYIPEPE (195 aa). Positions 19–26 are G1; sequence GHVDHGKT. 19–26 contributes to the GTP binding site; the sequence is GHVDHGKT. Threonine 26 is a binding site for Mg(2+). The interval 60-64 is G2; the sequence is GITIN. A G3 region spans residues 81 to 84; sequence DCPG. GTP contacts are provided by residues 81–85 and 136–139; these read DCPGH and NKCD. Residues 136–139 are G4; sequence NKCD. Residues 174–176 form a G5 region; that stretch reads SAL.

Belongs to the TRAFAC class translation factor GTPase superfamily. Classic translation factor GTPase family. EF-Tu/EF-1A subfamily. As to quaternary structure, monomer.

The protein resides in the cytoplasm. The enzyme catalyses GTP + H2O = GDP + phosphate + H(+). Functionally, GTP hydrolase that promotes the GTP-dependent binding of aminoacyl-tRNA to the A-site of ribosomes during protein biosynthesis. This is Elongation factor Tu from Aeromonas hydrophila subsp. hydrophila (strain ATCC 7966 / DSM 30187 / BCRC 13018 / CCUG 14551 / JCM 1027 / KCTC 2358 / NCIMB 9240 / NCTC 8049).